A 239-amino-acid chain; its full sequence is uncharacterized protein (239 aa).

A dksA C4-type; degenerate zinc finger spans residues 94-114 (CEVSGKEIPFERLEALPTATT). Acidic residues predominate over residues 133-158 (ETPFGQFEFDDDEEIRAPYDSEDSYQ). Positions 133–182 (ETPFGQFEFDDDEEIRAPYDSEDSYQDVEKYGNSQTPQDMENPPLSYDDM) are disordered.

This is an uncharacterized protein from Bacillus subtilis (strain 168).